We begin with the raw amino-acid sequence, 281 residues long: BEN domain-containing protein 6 (281 aa).

Disordered stretches follow at residues 15–62 (VLRK…ETPL) and 143–172 (SFAS…PGEK). Residues 19–99 (RKRKRTETAN…RLRQSLVMLQ (81 aa)) are a coiled coil. Residues 143 to 160 (SFASLCSNSNSTSSSPSS) are compositionally biased toward low complexity. Over residues 162 to 172 (KAEEEQHPGEK) the composition is skewed to basic and acidic residues. Positions 171 to 271 (EKQFTIERWQ…NCTKKPNASK (101 aa)) constitute a BEN domain.

Interacts (via BEN domain) with RBPJ.

It is found in the nucleus. Functionally, acts as a corepressor of recombining binding protein suppressor hairless (RBPJ) and inhibits Notch signaling in neural stem cells, thereby opposing their self-renewal and promoting neurogenesis. The polypeptide is BEN domain-containing protein 6 (Bend6) (Mus musculus (Mouse)).